The primary structure comprises 459 residues: Cysteine--tRNA ligase (459 aa).

Cys28 lines the Zn(2+) pocket. The 'HIGH' region signature appears at 30 to 40 (ITIYDYCHIGH). Cys209, His234, and Glu238 together coordinate Zn(2+). The short motif at 266–270 (KMSKS) is the 'KMSKS' region element. Lys269 contributes to the ATP binding site.

It belongs to the class-I aminoacyl-tRNA synthetase family. As to quaternary structure, monomer. Zn(2+) is required as a cofactor.

The protein resides in the cytoplasm. It catalyses the reaction tRNA(Cys) + L-cysteine + ATP = L-cysteinyl-tRNA(Cys) + AMP + diphosphate. The protein is Cysteine--tRNA ligase of Pseudoalteromonas translucida (strain TAC 125).